A 428-amino-acid chain; its full sequence is Enolase (428 aa).

(2R)-2-phosphoglycerate is bound at residue Gln163. The Proton donor role is filled by Glu205. Residues Asp242, Glu283, and Asp310 each contribute to the Mg(2+) site. Positions 335, 364, 365, and 386 each coordinate (2R)-2-phosphoglycerate. Lys335 serves as the catalytic Proton acceptor.

This sequence belongs to the enolase family. Requires Mg(2+) as cofactor.

It is found in the cytoplasm. The protein localises to the secreted. Its subcellular location is the cell surface. The enzyme catalyses (2R)-2-phosphoglycerate = phosphoenolpyruvate + H2O. It participates in carbohydrate degradation; glycolysis; pyruvate from D-glyceraldehyde 3-phosphate: step 4/5. Catalyzes the reversible conversion of 2-phosphoglycerate (2-PG) into phosphoenolpyruvate (PEP). It is essential for the degradation of carbohydrates via glycolysis. The polypeptide is Enolase (Streptomyces avermitilis (strain ATCC 31267 / DSM 46492 / JCM 5070 / NBRC 14893 / NCIMB 12804 / NRRL 8165 / MA-4680)).